The following is a 298-amino-acid chain: uncharacterized protein (298 aa).

The region spanning 2 to 229 is the ABC transporter domain; sequence LTIDHVTKTF…FGKKNVTIHS (228 aa). 34–41 serves as a coordination point for ATP; sequence GANGAGKT.

Belongs to the ABC transporter superfamily.

Its subcellular location is the cell membrane. This is an uncharacterized protein from Bacillus subtilis (strain 168).